We begin with the raw amino-acid sequence, 223 residues long: Endonuclease NucS (223 aa).

It belongs to the NucS endonuclease family.

The protein localises to the cytoplasm. Its function is as follows. Cleaves both 3' and 5' ssDNA extremities of branched DNA structures. This Streptomyces avermitilis (strain ATCC 31267 / DSM 46492 / JCM 5070 / NBRC 14893 / NCIMB 12804 / NRRL 8165 / MA-4680) protein is Endonuclease NucS.